The following is a 248-amino-acid chain: 1-(5-phosphoribosyl)-5-[(5-phosphoribosylamino)methylideneamino] imidazole-4-carboxamide isomerase (248 aa).

The active-site Proton acceptor is Asp-8. The active-site Proton donor is the Asp-131.

This sequence belongs to the HisA/HisF family.

It localises to the cytoplasm. The enzyme catalyses 1-(5-phospho-beta-D-ribosyl)-5-[(5-phospho-beta-D-ribosylamino)methylideneamino]imidazole-4-carboxamide = 5-[(5-phospho-1-deoxy-D-ribulos-1-ylimino)methylamino]-1-(5-phospho-beta-D-ribosyl)imidazole-4-carboxamide. It participates in amino-acid biosynthesis; L-histidine biosynthesis; L-histidine from 5-phospho-alpha-D-ribose 1-diphosphate: step 4/9. This is 1-(5-phosphoribosyl)-5-[(5-phosphoribosylamino)methylideneamino] imidazole-4-carboxamide isomerase from Nitrosomonas eutropha (strain DSM 101675 / C91 / Nm57).